We begin with the raw amino-acid sequence, 256 residues long: Phosphatidylglycerol--prolipoprotein diacylglyceryl transferase (256 aa).

Transmembrane regions (helical) follow at residues 19–39, 56–76, and 91–111; these read VHWY…LGYW, LIFY…MLFY, and IWEG…AAWL. Residue Arg139 participates in a 1,2-diacyl-sn-glycero-3-phospho-(1'-sn-glycerol) binding. The helical transmembrane segment at 231–251 threads the bilayer; the sequence is FGWLTMGQVLSIPMLLIGIWL.

Belongs to the Lgt family.

The protein resides in the cell inner membrane. It carries out the reaction L-cysteinyl-[prolipoprotein] + a 1,2-diacyl-sn-glycero-3-phospho-(1'-sn-glycerol) = an S-1,2-diacyl-sn-glyceryl-L-cysteinyl-[prolipoprotein] + sn-glycerol 1-phosphate + H(+). The protein operates within protein modification; lipoprotein biosynthesis (diacylglyceryl transfer). Its function is as follows. Catalyzes the transfer of the diacylglyceryl group from phosphatidylglycerol to the sulfhydryl group of the N-terminal cysteine of a prolipoprotein, the first step in the formation of mature lipoproteins. This chain is Phosphatidylglycerol--prolipoprotein diacylglyceryl transferase, found in Legionella pneumophila (strain Paris).